A 917-amino-acid polypeptide reads, in one-letter code: Outer membrane protein SlpA (917 aa).

A signal peptide spans 1 to 23; it reads MKKRLVTLLAGLLTVLSMGFGLA. The SLH domain maps to 24–84; the sequence is QFSDVPAGHW…QQIEEELKTQ (61 aa).

As to quaternary structure, homotrimer.

It localises to the cell outer membrane. In terms of biological role, plays an important role in the structural organization and integrity of the cell envelope, bridging the outer membrane to the peptidoglyan layer. Appears to be a nonselective channel. The protein is Outer membrane protein SlpA (slpA) of Thermus thermophilus (strain ATCC 27634 / DSM 579 / HB8).